The following is a 361-amino-acid chain: Probable cytosolic iron-sulfur protein assembly protein 1 (361 aa).

7 WD repeats span residues 10-49 (AHSDKAWSVSAHKTVPLLATASTDKTSKIYKLSVKQNFPQ), 56-105 (THKR…TEIL), 120-160 (GHEN…EEFE), 167-206 (DHQHDIKHVVWHPHQNLLASSSYDDTIRLYKQDLDDDDWS), 213-265 (GHEG…SIKH), 280-319 (VHQYPIYSVAWSAQSGKIATVGSDGKIVIYIEGDDNSWSI), and 327-361 (HGVHEINSIIWALLDDQSEVLVTAGDDGCVNIWKP).

It belongs to the WD repeat CIA1 family. Interacts with NAR1.

The protein localises to the cytoplasm. The protein resides in the nucleus. Its function is as follows. Essential component of the cytosolic iron-sulfur (Fe/S) protein assembly machinery. Required for the maturation of extramitochondrial Fe/S proteins. The sequence is that of Probable cytosolic iron-sulfur protein assembly protein 1 from Scheffersomyces stipitis (strain ATCC 58785 / CBS 6054 / NBRC 10063 / NRRL Y-11545) (Yeast).